Consider the following 357-residue polypeptide: Cholinesterase 1 (357 aa).

The active-site Acyl-ester intermediate is Ser112. A disulfide bridge links Cys166 with Cys179. Active-site charge relay system residues include Glu244 and His357.

The protein belongs to the type-B carboxylesterase/lipase family.

The catalysed reaction is an acylcholine + H2O = a carboxylate + choline + H(+). The sequence is that of Cholinesterase 1 (CHE1) from Branchiostoma lanceolatum (Common lancelet).